Reading from the N-terminus, the 931-residue chain is Netrin receptor UNC5C (931 aa).

A signal peptide spans 1-40; it reads MRKGLRATAARCGLGLGYLLQMLVLPALALLSASGTGSAA. The Extracellular segment spans residues 41 to 380; the sequence is QDDDFFHELP…APDSDDVALY (340 aa). The Ig-like domain occupies 62–159; sequence PHFLIEPEEA…AGTTKSRKAY (98 aa). 9 disulfide bridges follow: C83–C144, C95–C142, C188–C239, C272–C309, C276–C313, C287–C299, C328–C362, C332–C367, and C340–C352. Residues 161–256 enclose the Ig-like C2-type domain; the sequence is RIAYLRKTFE…KRKSTTATVI (96 aa). N236 is a glycosylation site (N-linked (GlcNAc...) asparagine). 2 TSP type-1 domains span residues 260–314 and 316–368; these read NGGW…TLCP and DGRW…GLCM. An N-linked (GlcNAc...) asparagine glycan is attached at N361. Residues 381 to 401 form a helical membrane-spanning segment; that stretch reads VGIVIAVTVCLAITVVVALFV. The Cytoplasmic portion of the chain corresponds to 402-931; that stretch reads YRKNHRDFES…VVSLAAEGQY (530 aa). The segment at 402–931 is required for netrin-mediated axon repulsion of neuronal growth cones; it reads YRKNHRDFES…VVSLAAEGQY (530 aa). A Phosphoserine modification is found at S502. The 144-residue stretch at 530–673 folds into the ZU5 domain; it reads CTAFGTFNSL…LSTYALVGQS (144 aa). Y568 carries the phosphotyrosine modification. Residues 694–712 form an interaction with DCC region; it reads SLEYSIRVYCLDDTQDALK. Residues 850 to 929 enclose the Death domain; sequence QKLCSSLDAP…ETVVSLAAEG (80 aa).

It belongs to the unc-5 family. Interacts with DCC (via cytoplasmic domain). Interacts (tyrosine phosphorylated form) with PTPN11. Interacts (via extracellular domain) with FLRT3 (via extracellular domain). Interacts (via Ig-like C2-type domain) with DSCAM (via extracellular domain). Interacts (via death domain) with DAPK1. Interacts (via cytoplasmic domain) with TUBB3; this interaction is decreased by NTN1/Netrin-1. Post-translationally, proteolytically cleaved by caspases during apoptosis. The cleavage does not take place when the receptor is associated with netrin ligand. Its cleavage by caspases is required to induce apoptosis. Phosphorylated on different cytoplasmic tyrosine residues. Phosphorylation of Tyr-568 leads to an interaction with PTPN11 phosphatase, suggesting that its activity is regulated by phosphorylation/dephosphorylation. Tyrosine phosphorylation is netrin-dependent. As to expression, detected in brain (at protein level). Mainly expressed in brain. Also expressed in kidney. Not expressed in developing or adult lung.

The protein localises to the cell membrane. Its subcellular location is the cell surface. It localises to the synapse. The protein resides in the synaptosome. It is found in the cell projection. The protein localises to the axon. Its subcellular location is the dendrite. It localises to the growth cone. The protein resides in the lamellipodium. It is found in the filopodium. Functionally, receptor for netrin required for axon guidance. Mediates axon repulsion of neuronal growth cones in the developing nervous system upon ligand binding. NTN1/Netrin-1 binding might cause dissociation of UNC5C from polymerized TUBB3 in microtubules and thereby lead to increased microtubule dynamics and axon repulsion. Axon repulsion in growth cones may also be caused by its association with DCC that may trigger signaling for repulsion. Might also collaborate with DSCAM in NTN1-mediated axon repulsion independently of DCC. Also involved in corticospinal tract axon guidance independently of DCC. Involved in dorsal root ganglion axon projection towards the spinal cord. It also acts as a dependence receptor required for apoptosis induction when not associated with netrin ligand. This chain is Netrin receptor UNC5C (Unc5c), found in Rattus norvegicus (Rat).